Here is a 291-residue protein sequence, read N- to C-terminus: 4-diphosphocytidyl-2-C-methyl-D-erythritol kinase (291 aa).

Lysine 11 is a catalytic residue. 94–104 (PAGSGLGGGSA) provides a ligand contact to ATP. Residue aspartate 136 is part of the active site.

This sequence belongs to the GHMP kinase family. IspE subfamily.

It catalyses the reaction 4-CDP-2-C-methyl-D-erythritol + ATP = 4-CDP-2-C-methyl-D-erythritol 2-phosphate + ADP + H(+). It participates in isoprenoid biosynthesis; isopentenyl diphosphate biosynthesis via DXP pathway; isopentenyl diphosphate from 1-deoxy-D-xylulose 5-phosphate: step 3/6. Catalyzes the phosphorylation of the position 2 hydroxy group of 4-diphosphocytidyl-2C-methyl-D-erythritol. The polypeptide is 4-diphosphocytidyl-2-C-methyl-D-erythritol kinase (Treponema pallidum (strain Nichols)).